The primary structure comprises 133 residues: Small ribosomal subunit protein uS8 (133 aa).

The protein belongs to the universal ribosomal protein uS8 family. Part of the 30S ribosomal subunit. Contacts proteins S5 and S12.

One of the primary rRNA binding proteins, it binds directly to 16S rRNA central domain where it helps coordinate assembly of the platform of the 30S subunit. In Chlamydia felis (strain Fe/C-56) (Chlamydophila felis), this protein is Small ribosomal subunit protein uS8.